We begin with the raw amino-acid sequence, 304 residues long: Thiosulfate sulfurtransferase TUM1 (304 aa).

2 Rhodanese domains span residues Lys20–Ser137 and Leu177–Ile299. Over residues Arg191–Ser201 the composition is skewed to basic and acidic residues. A disordered region spans residues Arg191–Pro222. Position 201 is a phosphoserine (Ser201). Cys259 (cysteine persulfide intermediate) is an active-site residue. Phosphoserine is present on Ser264.

It is found in the mitochondrion. The protein localises to the cytoplasm. It catalyses the reaction thiosulfate + hydrogen cyanide = thiocyanate + sulfite + 2 H(+). In terms of biological role, sulfur transferase that accepts persulfite from NFS1 and transfers it to UBA4 in the pathway for 2-thiolation of the wobble uridine base of tRNAs. Stimulates sulfur transfer by NFS1. Involved in metabolism of sterol esters in a tRNA thiolation pathway-independent manner. This Saccharomyces cerevisiae (strain ATCC 204508 / S288c) (Baker's yeast) protein is Thiosulfate sulfurtransferase TUM1.